Here is a 131-residue protein sequence, read N- to C-terminus: Large ribosomal subunit protein uL22 (131 aa).

The span at 1 to 11 (MAKGHRSKIKR) shows a compositional bias: basic residues. Residues 1-20 (MAKGHRSKIKRERNEVRDTR) form a disordered region.

Belongs to the universal ribosomal protein uL22 family. In terms of assembly, part of the 50S ribosomal subunit.

This protein binds specifically to 23S rRNA; its binding is stimulated by other ribosomal proteins, e.g. L4, L17, and L20. It is important during the early stages of 50S assembly. It makes multiple contacts with different domains of the 23S rRNA in the assembled 50S subunit and ribosome. In terms of biological role, the globular domain of the protein is located near the polypeptide exit tunnel on the outside of the subunit, while an extended beta-hairpin is found that lines the wall of the exit tunnel in the center of the 70S ribosome. The sequence is that of Large ribosomal subunit protein uL22 from Agathobacter rectalis (strain ATCC 33656 / DSM 3377 / JCM 17463 / KCTC 5835 / VPI 0990) (Eubacterium rectale).